We begin with the raw amino-acid sequence, 208 residues long: Small ribosomal subunit protein uS4 (208 aa).

Positions 95-157 (RRIDNIVYRA…DSLKKLVRSN (63 aa)) constitute an S4 RNA-binding domain.

This sequence belongs to the universal ribosomal protein uS4 family. In terms of assembly, part of the 30S ribosomal subunit. Contacts protein S5. The interaction surface between S4 and S5 is involved in control of translational fidelity.

In terms of biological role, one of the primary rRNA binding proteins, it binds directly to 16S rRNA where it nucleates assembly of the body of the 30S subunit. Functionally, with S5 and S12 plays an important role in translational accuracy. The protein is Small ribosomal subunit protein uS4 of Borrelia duttonii (strain Ly).